The chain runs to 215 residues: Variable small protein 6 (215 aa).

Residues 1 to 18 form the signal peptide; sequence MRKRISAIIMTLFMVFMS. A lipid anchor (N-palmitoyl cysteine) is attached at Cys19. Cys19 is lipidated: S-diacylglycerol cysteine.

It belongs to the variable small protein (Vsp) family.

The protein resides in the cell outer membrane. Its function is as follows. The Vlp and Vsp proteins are antigenically distinct proteins, only one vlp or vsp gene is transcriptionally active at any one time. Switching between these genes is a mechanism of host immune response evasion. This chain is Variable small protein 6, found in Borrelia hermsii.